Here is a 185-residue protein sequence, read N- to C-terminus: Ribosome-recycling factor (185 aa).

It belongs to the RRF family.

It is found in the cytoplasm. Functionally, responsible for the release of ribosomes from messenger RNA at the termination of protein biosynthesis. May increase the efficiency of translation by recycling ribosomes from one round of translation to another. This Sodalis glossinidius (strain morsitans) protein is Ribosome-recycling factor.